Here is a 217-residue protein sequence, read N- to C-terminus: Carboxylesterase Culp1 (217 aa).

Positions 1–32 are cleaved as a signal peptide; the sequence is MTPRSLVRIVGVVVATTLALVSAPAGGRAAHA. Cysteines 35 and 107 form a disulfide. Residue serine 118 is the Nucleophile of the active site. An intrachain disulfide couples cysteine 177 to cysteine 184. Aspartate 181 is a catalytic residue. Residue histidine 193 is the Proton donor/acceptor of the active site.

Belongs to the cutinase family.

The protein localises to the secreted. The catalysed reaction is a fatty acid ester + H2O = an aliphatic alcohol + a fatty acid + H(+). Its function is as follows. Shows esterase activity, with a preference for short- and medium-chain fatty acids. This is Carboxylesterase Culp1 from Mycobacterium bovis (strain ATCC BAA-935 / AF2122/97).